The chain runs to 259 residues: Thiazole synthase (259 aa).

Lys95 (schiff-base intermediate with DXP) is an active-site residue. 1-deoxy-D-xylulose 5-phosphate is bound by residues Gly156, 182–183 (AG), and 204–205 (AS).

This sequence belongs to the ThiG family. Homotetramer. Forms heterodimers with either ThiH or ThiS.

Its subcellular location is the cytoplasm. It carries out the reaction [ThiS sulfur-carrier protein]-C-terminal-Gly-aminoethanethioate + 2-iminoacetate + 1-deoxy-D-xylulose 5-phosphate = [ThiS sulfur-carrier protein]-C-terminal Gly-Gly + 2-[(2R,5Z)-2-carboxy-4-methylthiazol-5(2H)-ylidene]ethyl phosphate + 2 H2O + H(+). It participates in cofactor biosynthesis; thiamine diphosphate biosynthesis. Functionally, catalyzes the rearrangement of 1-deoxy-D-xylulose 5-phosphate (DXP) to produce the thiazole phosphate moiety of thiamine. Sulfur is provided by the thiocarboxylate moiety of the carrier protein ThiS. In vitro, sulfur can be provided by H(2)S. This Corynebacterium efficiens (strain DSM 44549 / YS-314 / AJ 12310 / JCM 11189 / NBRC 100395) protein is Thiazole synthase.